The sequence spans 484 residues: tRNA sulfurtransferase (484 aa).

In terms of domain architecture, THUMP spans 63–167; it reads EAFGERLACI…NDNLYLIDKR (105 aa). Residues 185–186, lysine 267, glycine 289, and glutamine 298 contribute to the ATP site; that span reads LI. Cysteine 346 and cysteine 458 are joined by a disulfide. In terms of domain architecture, Rhodanese spans 406–484; that stretch reads INANEIIIDV…GYTNVKVYRP (79 aa). Cysteine 458 serves as the catalytic Cysteine persulfide intermediate.

The protein belongs to the ThiI family.

Its subcellular location is the cytoplasm. It catalyses the reaction [ThiI sulfur-carrier protein]-S-sulfanyl-L-cysteine + a uridine in tRNA + 2 reduced [2Fe-2S]-[ferredoxin] + ATP + H(+) = [ThiI sulfur-carrier protein]-L-cysteine + a 4-thiouridine in tRNA + 2 oxidized [2Fe-2S]-[ferredoxin] + AMP + diphosphate. It carries out the reaction [ThiS sulfur-carrier protein]-C-terminal Gly-Gly-AMP + S-sulfanyl-L-cysteinyl-[cysteine desulfurase] + AH2 = [ThiS sulfur-carrier protein]-C-terminal-Gly-aminoethanethioate + L-cysteinyl-[cysteine desulfurase] + A + AMP + 2 H(+). It functions in the pathway cofactor biosynthesis; thiamine diphosphate biosynthesis. Functionally, catalyzes the ATP-dependent transfer of a sulfur to tRNA to produce 4-thiouridine in position 8 of tRNAs, which functions as a near-UV photosensor. Also catalyzes the transfer of sulfur to the sulfur carrier protein ThiS, forming ThiS-thiocarboxylate. This is a step in the synthesis of thiazole, in the thiamine biosynthesis pathway. The sulfur is donated as persulfide by IscS. The chain is tRNA sulfurtransferase from Shewanella halifaxensis (strain HAW-EB4).